Consider the following 292-residue polypeptide: THO complex subunit 4B (292 aa).

A disordered region spans residues 1-50; the sequence is MSGGLDMSLDDIIKSNRKPTGSRGRGGIGGGNNTGGRGGSGSNSGPSRRF. An N-acetylserine modification is found at Ser-2. Over residues 23–42 the composition is skewed to gly residues; sequence RGRGGIGGGNNTGGRGGSGS. The RRM domain occupies 108–185; the sequence is TKLYISNLDY…KLMKIEIVGT (78 aa). Residues 241–252 are compositionally biased toward gly residues; it reads GGGFGGGNFRGG. A disordered region spans residues 241–292; the sequence is GGGFGGGNFRGGRGARGRGGRGSGGRGRDENVSAEDLDAELDKYHKEAMETS. A compositionally biased stretch (basic and acidic residues) spans 280–292; it reads ELDKYHKEAMETS.

Belongs to the ALYREF family. As to quaternary structure, interacts with RH15 and RH56.

The protein localises to the nucleus. Its subcellular location is the nucleoplasm. In terms of biological role, export adapter involved in nuclear export of spliced and unspliced mRNA. The sequence is that of THO complex subunit 4B (ALY2) from Arabidopsis thaliana (Mouse-ear cress).